A 317-amino-acid chain; its full sequence is Probable cell division protein WhiA (317 aa).

Positions 278–311 (SLQGLGELLDPQVGKSGVNHRLRKIGEKADELRQ) form a DNA-binding region, H-T-H motif.

Belongs to the WhiA family.

Involved in cell division and chromosome segregation. The chain is Probable cell division protein WhiA from Lachnospira eligens (strain ATCC 27750 / DSM 3376 / VPI C15-48 / C15-B4) (Eubacterium eligens).